The sequence spans 551 residues: Solute carrier family 22 member 13 (551 aa).

Residues 1 to 20 lie on the Cytoplasmic side of the membrane; it reads MAQFVQVLAEIGDFGRFQIQ. A helical transmembrane segment spans residues 21 to 41; it reads LLILLCVLNFLSPFYFFAHVF. The Extracellular portion of the chain corresponds to 42–138; sequence MVLDEPHHCA…LVCDRKHLKD (97 aa). Asparagine 57, asparagine 61, asparagine 92, and asparagine 104 each carry an N-linked (GlcNAc...) asparagine glycan. A helical membrane pass occupies residues 139 to 159; it reads TTQSVFMAGLLVGTLMFGPLC. Topologically, residues 160-167 are cytoplasmic; that stretch reads DRIGRKAT. The helical transmembrane segment at 168-188 threads the bilayer; the sequence is ILAQLLLFTLIGLATAFVPSF. Residues 189-195 are Extracellular-facing; that stretch reads ELYMALR. The helical transmembrane segment at 196-216 threads the bilayer; it reads FAVATAVAGLSFSNVTLLTEW. Residues 217 to 224 are Cytoplasmic-facing; that stretch reads VGPSWRTQ. The helical transmembrane segment at 225–245 threads the bilayer; that stretch reads AVVLAQCNFSLGQMVLAGLAY. The Extracellular segment spans residues 246 to 251; sequence GFRNWR. A helical transmembrane segment spans residues 252–272; it reads LLQITGTAPGLLLFFYFWALP. Residues 273–332 are Cytoplasmic-facing; the sequence is ESARWLLTRGRMDEAIQLIQKAASVNRRKLSPELMNQLVPEKTGPSGNALDLFRHPQLRK. A helical transmembrane segment spans residues 333-353; sequence VTLIIFCVWFVDSLGYYGLSL. Position 354 (glutamine 354) is a topological domain, extracellular. The chain crosses the membrane as a helical span at residues 355–375; sequence VGDFGLDVYLTQLIFGAVEVP. Residues 376-397 are Cytoplasmic-facing; it reads ARCSSIFMMQRFGRKWSQLGTL. The chain crosses the membrane as a helical span at residues 398–418; it reads VLGGLMCIIIIFIPADLPVVV. Residues 419–427 are Extracellular-facing; it reads TMLAVVGKM. Residues 428–448 form a helical membrane-spanning segment; that stretch reads ATAAAFTISYVYSAELFPTIL. The Cytoplasmic portion of the chain corresponds to 449-452; the sequence is RQTG. A helical transmembrane segment spans residues 453 to 473; it reads MGLVGIFSRIGGILTPLVILL. Residues 474 to 478 lie on the Extracellular side of the membrane; it reads GEYHA. The helical transmembrane segment at 479–499 threads the bilayer; it reads ALPMLIYGSLPIVAGLLCTLL. Residues 500 to 551 are Cytoplasmic-facing; it reads PETHGQGLKDTLQDLELGPHPRSPKSVPSEKETEAKGRTSSPGVAFVSSTYF. The disordered stretch occupies residues 511–551; sequence LQDLELGPHPRSPKSVPSEKETEAKGRTSSPGVAFVSSTYF. Residues 527 to 536 are compositionally biased toward basic and acidic residues; the sequence is PSEKETEAKG. The span at 537–551 shows a compositional bias: polar residues; that stretch reads RTSSPGVAFVSSTYF.

This sequence belongs to the major facilitator (TC 2.A.1) superfamily. Organic cation transporter (TC 2.A.1.19) family. Glycosylated. In terms of tissue distribution, ubiquitous. Highly expressed in kidneys and to a weaker extent in brain, heart, and intestine. In kidneys, expressed in proximal convoluted tubule. In kidneys, also expressed in cortical collecting duct, whereas glomerulus and thick ascending limb exhibit no expression.

It localises to the apical cell membrane. The enzyme catalyses urate(out) + (S)-lactate(in) = urate(in) + (S)-lactate(out). It carries out the reaction urate(out) + succinate(in) = urate(in) + succinate(out). It catalyses the reaction urate(out) + glutathione(in) = urate(in) + glutathione(out). The catalysed reaction is nicotinate(in) + urate(out) = nicotinate(out) + urate(in). The enzyme catalyses orotate(out) + a carboxylate(in) = orotate(in) + a carboxylate(out). In terms of biological role, anion antiporter that mediates the transport of urate, orotate and nicotinate in exchange for organic or inorganic anions. Translocates urate and orotate across the apical membrane of proximal tubule epithelial cells and involved in urate renal reabsorption. Possibly involved in orotate renal reabsorption and nicotinate intestinal reabsorption. Mediates urate uptake by an exchange with organic anions such as (S)-lactate, succinate, glutathione and nicotinate. Urate and orotate transports are Cl(-)-dependent. Shows similar transport characteristics as the urate/orotate renal antiporter SLC22A12/URAT1 and may act as a compensator of SLC22A12/URAT1 in certain conditions. The polypeptide is Solute carrier family 22 member 13 (Homo sapiens (Human)).